A 301-amino-acid chain; its full sequence is Ribosomal large subunit pseudouridine synthase C (301 aa).

An S4 RNA-binding domain is found at 11–70; it reads SRLDKYLRRLYPLLTQGVIEKALRQKQIIVNSKKAEASLRVVEGDEIFIHDKFNLPIAQP. Residue Asp140 is part of the active site.

It belongs to the pseudouridine synthase RluA family.

It carries out the reaction uridine(955/2504/2580) in 23S rRNA = pseudouridine(955/2504/2580) in 23S rRNA. Its function is as follows. Responsible for synthesis of pseudouridine from uracil at positions 955, 2504 and 2580 in 23S ribosomal RNA. This is Ribosomal large subunit pseudouridine synthase C (rluC) from Rickettsia bellii (strain RML369-C).